Here is a 328-residue protein sequence, read N- to C-terminus: MSEKIRVLLYYKYVSIENAQEYAAKHLEFCKSIGLKGRILIADEGINGTVSGDYETTQKYMDWVHSDERFADLWFKIDEENQQAFRKMFVRYKKEIVHLGLEDNNFDSDINPLETTGEYLNPKQFKEALLDEDTVVLDTRNDYEYDLGHFRGAIRPDIRNFRELPQWVRDNKDKFMEKRVVVYCTGGVRCEKFSGWMVREGFKDVGQLHGGIATYGKDPEVQGELWDGAMYVFDDRISVPINHVNPTVVSKDYFDGTPCERYVNCANPFCNKQIFASEENETKYVRGCSPECRAHERNRYVQENGLSRQEWAERLEAIGESLPEFVGA.

The region spanning 130–224 is the Rhodanese domain; the sequence is LDEDTVVLDT…YGKDPEVQGE (95 aa). Catalysis depends on Cys184, which acts as the Cysteine persulfide intermediate.

Belongs to the TrhO family.

The catalysed reaction is uridine(34) in tRNA + AH2 + O2 = 5-hydroxyuridine(34) in tRNA + A + H2O. Its function is as follows. Catalyzes oxygen-dependent 5-hydroxyuridine (ho5U) modification at position 34 in tRNAs. This Streptococcus pyogenes serotype M3 (strain SSI-1) protein is tRNA uridine(34) hydroxylase.